Here is a 590-residue protein sequence, read N- to C-terminus: Methionine--tRNA ligase, mitochondrial (590 aa).

Residues 1-26 (MRTRFLFLTSGCKAVPELHKIVLANA) constitute a mitochondrion transit peptide. The short motif at 51–61 (FYVNASPHLGH) is the 'HIGH' region element. The short motif at 342–346 (KMSKS) is the 'KMSKS' region element. Lys345 contacts ATP. Residues 570 to 590 (LESQRADQQKNRKMEKGSNLK) are disordered. Residues 571–590 (ESQRADQQKNRKMEKGSNLK) show a composition bias toward basic and acidic residues.

This sequence belongs to the class-I aminoacyl-tRNA synthetase family.

It is found in the mitochondrion matrix. The enzyme catalyses tRNA(Met) + L-methionine + ATP = L-methionyl-tRNA(Met) + AMP + diphosphate. The sequence is that of Methionine--tRNA ligase, mitochondrial (mars2) from Takifugu rubripes (Japanese pufferfish).